The primary structure comprises 352 residues: Probable dual-specificity RNA methyltransferase RlmN (352 aa).

Glu93 functions as the Proton acceptor in the catalytic mechanism. The region spanning 99–332 (TAKRLTVCVS…ATVRQTRGLD (234 aa)) is the Radical SAM core domain. An intrachain disulfide couples Cys106 to Cys337. Positions 113, 117, and 120 each coordinate [4Fe-4S] cluster. Residues 160–161 (GE), Ser190, 213–215 (SLH), and Asn294 contribute to the S-adenosyl-L-methionine site. Catalysis depends on Cys337, which acts as the S-methylcysteine intermediate.

It belongs to the radical SAM superfamily. RlmN family. [4Fe-4S] cluster serves as cofactor.

The protein resides in the cytoplasm. The catalysed reaction is adenosine(2503) in 23S rRNA + 2 reduced [2Fe-2S]-[ferredoxin] + 2 S-adenosyl-L-methionine = 2-methyladenosine(2503) in 23S rRNA + 5'-deoxyadenosine + L-methionine + 2 oxidized [2Fe-2S]-[ferredoxin] + S-adenosyl-L-homocysteine. The enzyme catalyses adenosine(37) in tRNA + 2 reduced [2Fe-2S]-[ferredoxin] + 2 S-adenosyl-L-methionine = 2-methyladenosine(37) in tRNA + 5'-deoxyadenosine + L-methionine + 2 oxidized [2Fe-2S]-[ferredoxin] + S-adenosyl-L-homocysteine. In terms of biological role, specifically methylates position 2 of adenine 2503 in 23S rRNA and position 2 of adenine 37 in tRNAs. The chain is Probable dual-specificity RNA methyltransferase RlmN from Synechococcus sp. (strain JA-2-3B'a(2-13)) (Cyanobacteria bacterium Yellowstone B-Prime).